A 533-amino-acid chain; its full sequence is Tyrosinase (533 aa).

A signal peptide spans 1–18 (MFLAVLYCLLWSFQISDG). Over 19 to 476 (HFPRACASSK…YLEQASRIWP (458 aa)) the chain is Lumenal, melanosome. 3 N-linked (GlcNAc...) asparagine glycosylation sites follow: N86, N111, and N161. Positions 180, 202, and 211 each coordinate Cu cation. N-linked (GlcNAc...) asparagine glycosylation is found at N230 and N337. Residues H363 and H367 each coordinate Cu cation. An N-linked (GlcNAc...) asparagine glycan is attached at N371. H390 is a binding site for Cu cation. A helical membrane pass occupies residues 477 to 497 (WLLGAALVGAVIAAALSGLSS). Residues 498 to 533 (RLCLQKKKKKKQPQEERQPLLMDKDDYHSLLYQSHL) lie on the Cytoplasmic side of the membrane.

Belongs to the tyrosinase family. Forms an OPN3-dependent complex with DCT in response to blue light in melanocytes. Requires Cu(2+) as cofactor. In terms of processing, glycosylated. As to expression, expressed in the skin.

Its subcellular location is the melanosome membrane. It is found in the melanosome. The catalysed reaction is 2 L-dopa + O2 = 2 L-dopaquinone + 2 H2O. It catalyses the reaction L-tyrosine + O2 = L-dopaquinone + H2O. The enzyme catalyses 2 5,6-dihydroxyindole-2-carboxylate + O2 = 2 indole-5,6-quinone-2-carboxylate + 2 H2O. Its function is as follows. This is a copper-containing oxidase that functions in the formation of pigments such as melanins and other polyphenolic compounds. Catalyzes the initial and rate limiting step in the cascade of reactions leading to melanin production from tyrosine. In addition to hydroxylating tyrosine to DOPA (3,4-dihydroxyphenylalanine), also catalyzes the oxidation of DOPA to DOPA-quinone, and possibly the oxidation of DHI (5,6-dihydroxyindole) to indole-5,6 quinone. The sequence is that of Tyrosinase (Tyr) from Mus musculus (Mouse).